The chain runs to 286 residues: Ribosomal RNA small subunit methyltransferase I (286 aa).

The protein belongs to the methyltransferase superfamily. RsmI family.

It is found in the cytoplasm. The enzyme catalyses cytidine(1402) in 16S rRNA + S-adenosyl-L-methionine = 2'-O-methylcytidine(1402) in 16S rRNA + S-adenosyl-L-homocysteine + H(+). Its function is as follows. Catalyzes the 2'-O-methylation of the ribose of cytidine 1402 (C1402) in 16S rRNA. The protein is Ribosomal RNA small subunit methyltransferase I of Escherichia coli O157:H7.